A 201-amino-acid chain; its full sequence is Dephospho-CoA kinase (201 aa).

The region spanning 4-201 (IIGITGGIAS…LEGGRQDDRD (198 aa)) is the DPCK domain. 12–17 (ASGKST) is an ATP binding site.

Belongs to the CoaE family.

Its subcellular location is the cytoplasm. The catalysed reaction is 3'-dephospho-CoA + ATP = ADP + CoA + H(+). Its pathway is cofactor biosynthesis; coenzyme A biosynthesis; CoA from (R)-pantothenate: step 5/5. Its function is as follows. Catalyzes the phosphorylation of the 3'-hydroxyl group of dephosphocoenzyme A to form coenzyme A. This chain is Dephospho-CoA kinase, found in Streptococcus pneumoniae (strain ATCC BAA-255 / R6).